The chain runs to 230 residues: Cytochrome c oxidase subunit 2 (230 aa).

Over 1–14 the chain is Mitochondrial intermembrane; it reads MAHPSQLGFQDAAS. A helical membrane pass occupies residues 15–45; sequence PVMEELLHFHDHALMIVFLISTLVLYIIVAM. Over 46-59 the chain is Mitochondrial matrix; the sequence is VSTKLTNKYILDSQ. A helical membrane pass occupies residues 60 to 87; it reads EIEIIWTVLPAVILILIALPSLRILYLM. Over 88-230 the chain is Mitochondrial intermembrane; that stretch reads DEINDPHLTI…SWSSLMLEDA (143 aa). Residues H161, C196, E198, C200, H204, and M207 each contribute to the Cu cation site. E198 contacts Mg(2+).

The protein belongs to the cytochrome c oxidase subunit 2 family. As to quaternary structure, component of the cytochrome c oxidase (complex IV, CIV), a multisubunit enzyme composed of 14 subunits. The complex is composed of a catalytic core of 3 subunits MT-CO1, MT-CO2 and MT-CO3, encoded in the mitochondrial DNA, and 11 supernumerary subunits COX4I, COX5A, COX5B, COX6A, COX6B, COX6C, COX7A, COX7B, COX7C, COX8 and NDUFA4, which are encoded in the nuclear genome. The complex exists as a monomer or a dimer and forms supercomplexes (SCs) in the inner mitochondrial membrane with NADH-ubiquinone oxidoreductase (complex I, CI) and ubiquinol-cytochrome c oxidoreductase (cytochrome b-c1 complex, complex III, CIII), resulting in different assemblies (supercomplex SCI(1)III(2)IV(1) and megacomplex MCI(2)III(2)IV(2)). Found in a complex with TMEM177, COA6, COX18, COX20, SCO1 and SCO2. Interacts with TMEM177 in a COX20-dependent manner. Interacts with COX20. Interacts with COX16. Requires Cu cation as cofactor.

It is found in the mitochondrion inner membrane. The catalysed reaction is 4 Fe(II)-[cytochrome c] + O2 + 8 H(+)(in) = 4 Fe(III)-[cytochrome c] + 2 H2O + 4 H(+)(out). Component of the cytochrome c oxidase, the last enzyme in the mitochondrial electron transport chain which drives oxidative phosphorylation. The respiratory chain contains 3 multisubunit complexes succinate dehydrogenase (complex II, CII), ubiquinol-cytochrome c oxidoreductase (cytochrome b-c1 complex, complex III, CIII) and cytochrome c oxidase (complex IV, CIV), that cooperate to transfer electrons derived from NADH and succinate to molecular oxygen, creating an electrochemical gradient over the inner membrane that drives transmembrane transport and the ATP synthase. Cytochrome c oxidase is the component of the respiratory chain that catalyzes the reduction of oxygen to water. Electrons originating from reduced cytochrome c in the intermembrane space (IMS) are transferred via the dinuclear copper A center (CU(A)) of subunit 2 and heme A of subunit 1 to the active site in subunit 1, a binuclear center (BNC) formed by heme A3 and copper B (CU(B)). The BNC reduces molecular oxygen to 2 water molecules using 4 electrons from cytochrome c in the IMS and 4 protons from the mitochondrial matrix. The sequence is that of Cytochrome c oxidase subunit 2 (mt-co2) from Gadus morhua (Atlantic cod).